We begin with the raw amino-acid sequence, 101 residues long: Large ribosomal subunit protein uL23 (101 aa).

It belongs to the universal ribosomal protein uL23 family. In terms of assembly, part of the 50S ribosomal subunit. Contacts protein L29, and trigger factor when it is bound to the ribosome.

One of the early assembly proteins it binds 23S rRNA. One of the proteins that surrounds the polypeptide exit tunnel on the outside of the ribosome. Forms the main docking site for trigger factor binding to the ribosome. This chain is Large ribosomal subunit protein uL23, found in Corynebacterium efficiens (strain DSM 44549 / YS-314 / AJ 12310 / JCM 11189 / NBRC 100395).